Reading from the N-terminus, the 427-residue chain is Glutamate-1-semialdehyde 2,1-aminomutase (427 aa).

Residue Lys265 is modified to N6-(pyridoxal phosphate)lysine.

Belongs to the class-III pyridoxal-phosphate-dependent aminotransferase family. HemL subfamily. Homodimer. Pyridoxal 5'-phosphate serves as cofactor.

Its subcellular location is the cytoplasm. It carries out the reaction (S)-4-amino-5-oxopentanoate = 5-aminolevulinate. It participates in porphyrin-containing compound metabolism; protoporphyrin-IX biosynthesis; 5-aminolevulinate from L-glutamyl-tRNA(Glu): step 2/2. The sequence is that of Glutamate-1-semialdehyde 2,1-aminomutase from Burkholderia mallei (strain NCTC 10229).